The primary structure comprises 386 residues: uncharacterized protein (386 aa).

K185 carries the post-translational modification N6-(pyridoxal phosphate)lysine.

Belongs to the DegT/DnrJ/EryC1 family. It depends on pyridoxal 5'-phosphate as a cofactor.

This is an uncharacterized protein from Methanocaldococcus jannaschii (strain ATCC 43067 / DSM 2661 / JAL-1 / JCM 10045 / NBRC 100440) (Methanococcus jannaschii).